A 176-amino-acid chain; its full sequence is Large ribosomal subunit protein uL10 (176 aa).

Belongs to the universal ribosomal protein uL10 family. As to quaternary structure, part of the ribosomal stalk of the 50S ribosomal subunit. The N-terminus interacts with L11 and the large rRNA to form the base of the stalk. The C-terminus forms an elongated spine to which L12 dimers bind in a sequential fashion forming a multimeric L10(L12)X complex.

In terms of biological role, forms part of the ribosomal stalk, playing a central role in the interaction of the ribosome with GTP-bound translation factors. This Natranaerobius thermophilus (strain ATCC BAA-1301 / DSM 18059 / JW/NM-WN-LF) protein is Large ribosomal subunit protein uL10.